The chain runs to 487 residues: Acetyl-coenzyme A carboxylase carboxyl transferase subunit beta, chloroplastic (487 aa).

Residues 180–201 (SRNSSENEGSSKRTRTKGSDLT) are disordered. The CoA carboxyltransferase N-terminal domain occupies 218–487 (LWVQCENCYG…PLNQKSSKIK (270 aa)). Positions 222, 225, 241, and 244 each coordinate Zn(2+). A C4-type zinc finger spans residues 222–244 (CENCYGLNYKKFLKSKMNICEQC).

Belongs to the AccD/PCCB family. As to quaternary structure, acetyl-CoA carboxylase is a heterohexamer composed of biotin carboxyl carrier protein, biotin carboxylase and 2 subunits each of ACCase subunit alpha and ACCase plastid-coded subunit beta (accD). It depends on Zn(2+) as a cofactor.

It is found in the plastid. It localises to the chloroplast stroma. It catalyses the reaction N(6)-carboxybiotinyl-L-lysyl-[protein] + acetyl-CoA = N(6)-biotinyl-L-lysyl-[protein] + malonyl-CoA. Its pathway is lipid metabolism; malonyl-CoA biosynthesis; malonyl-CoA from acetyl-CoA: step 1/1. In terms of biological role, component of the acetyl coenzyme A carboxylase (ACC) complex. Biotin carboxylase (BC) catalyzes the carboxylation of biotin on its carrier protein (BCCP) and then the CO(2) group is transferred by the transcarboxylase to acetyl-CoA to form malonyl-CoA. This Atropa belladonna (Belladonna) protein is Acetyl-coenzyme A carboxylase carboxyl transferase subunit beta, chloroplastic.